The chain runs to 342 residues: L-threonine 3-dehydrogenase (342 aa).

Cys38 lines the Zn(2+) pocket. Catalysis depends on charge relay system residues Thr40 and His43. Residues His63, Glu64, Cys93, Cys96, Cys99, and Cys107 each coordinate Zn(2+). Residues Ile175, Asp195, Arg200, 262–264 (LGI), and 286–287 (IY) each bind NAD(+).

The protein belongs to the zinc-containing alcohol dehydrogenase family. As to quaternary structure, homotetramer. Zn(2+) is required as a cofactor.

It localises to the cytoplasm. The catalysed reaction is L-threonine + NAD(+) = (2S)-2-amino-3-oxobutanoate + NADH + H(+). Its pathway is amino-acid degradation; L-threonine degradation via oxydo-reductase pathway; glycine from L-threonine: step 1/2. Its function is as follows. Catalyzes the NAD(+)-dependent oxidation of L-threonine to 2-amino-3-ketobutyrate. The polypeptide is L-threonine 3-dehydrogenase (Burkholderia ambifaria (strain MC40-6)).